A 514-amino-acid polypeptide reads, in one-letter code: ATP synthase subunit alpha (514 aa).

170–177 (GDRQIGKT) contacts ATP.

It belongs to the ATPase alpha/beta chains family. In terms of assembly, F-type ATPases have 2 components, CF(1) - the catalytic core - and CF(0) - the membrane proton channel. CF(1) has five subunits: alpha(3), beta(3), gamma(1), delta(1), epsilon(1). CF(0) has three main subunits: a(1), b(2) and c(9-12). The alpha and beta chains form an alternating ring which encloses part of the gamma chain. CF(1) is attached to CF(0) by a central stalk formed by the gamma and epsilon chains, while a peripheral stalk is formed by the delta and b chains.

The protein resides in the cell inner membrane. The enzyme catalyses ATP + H2O + 4 H(+)(in) = ADP + phosphate + 5 H(+)(out). In terms of biological role, produces ATP from ADP in the presence of a proton gradient across the membrane. The alpha chain is a regulatory subunit. This is ATP synthase subunit alpha from Pseudomonas putida (strain ATCC 47054 / DSM 6125 / CFBP 8728 / NCIMB 11950 / KT2440).